We begin with the raw amino-acid sequence, 209 residues long: Large ribosomal subunit protein uL3 (209 aa).

The segment at 141-163 (RAVGSMGASSDPSRTFKNKRMPG) is disordered.

This sequence belongs to the universal ribosomal protein uL3 family. Part of the 50S ribosomal subunit. Forms a cluster with proteins L14 and L19.

Functionally, one of the primary rRNA binding proteins, it binds directly near the 3'-end of the 23S rRNA, where it nucleates assembly of the 50S subunit. This Clostridium botulinum (strain Langeland / NCTC 10281 / Type F) protein is Large ribosomal subunit protein uL3.